The chain runs to 156 residues: Small ribosomal subunit protein uS7 (156 aa).

This sequence belongs to the universal ribosomal protein uS7 family. As to quaternary structure, part of the 30S ribosomal subunit. Contacts proteins S9 and S11.

One of the primary rRNA binding proteins, it binds directly to 16S rRNA where it nucleates assembly of the head domain of the 30S subunit. Is located at the subunit interface close to the decoding center, probably blocks exit of the E-site tRNA. This is Small ribosomal subunit protein uS7 from Neisseria meningitidis serogroup C (strain 053442).